The primary structure comprises 116 residues: MANHRIDRVGMEIKREVNDILQKKVRDPRVQGVTITEVQMQGDLSLAKVYYTIMSDLASDNQKAQTGLEKATGTIKRELGKQLTMYKIPDLVFEKDNSIAYGNKIDQLLRELDNKS.

Belongs to the RbfA family. Monomer. Binds 30S ribosomal subunits, but not 50S ribosomal subunits or 70S ribosomes.

It is found in the cytoplasm. Its function is as follows. One of several proteins that assist in the late maturation steps of the functional core of the 30S ribosomal subunit. Associates with free 30S ribosomal subunits (but not with 30S subunits that are part of 70S ribosomes or polysomes). Required for efficient processing of 16S rRNA. May interact with the 5'-terminal helix region of 16S rRNA. This chain is Ribosome-binding factor A, found in Streptococcus pyogenes serotype M5 (strain Manfredo).